The primary structure comprises 637 residues: Zinc finger protein rsv2 (637 aa).

6 disordered regions span residues 1–41 (MDTT…SKMN), 145–164 (SNHQ…PTSA), 169–207 (IITA…QPFS), 221–363 (TGAI…STAL), 404–427 (QDSF…TRSY), and 440–558 (SVNP…GAQR). Low complexity predominate over residues 172 to 189 (ANSSPSGNAGSNASASMS). A compositionally biased stretch (polar residues) spans 196–207 (PSASTINDQPFS). The segment covering 279-296 (SDLKRSLGHNQKSDRVSK) has biased composition (basic and acidic residues). Residues 298 to 344 (VSPQHQANPSTLNNPLKTQNFDSSKNLYTDNKDSSLVSPTGLQSRME) show a composition bias toward polar residues. Basic and acidic residues-rich tracts occupy residues 345 to 355 (QNPEVRAHPMK) and 404 to 413 (QDSFNKESIK). The segment covering 455–471 (VPSNTTISSSPPLTSPV) has biased composition (low complexity). Composition is skewed to polar residues over residues 472-498 (KTSA…QSAA) and 508-527 (YYNT…QKVS). Over residues 544–554 (TTPTNSSTTAT) the composition is skewed to low complexity. The segment at 572–603 (VRCTLQNRVTGEICNTVFSRTYDLIRHQDTIH) adopts a C2H2-type 1 zinc-finger fold. Residues 610–635 (FRCEICGDQRHFSRHDALVRHLRVKH) form a C2H2-type 2; degenerate zinc finger.

It is found in the nucleus. The polypeptide is Zinc finger protein rsv2 (rsv2) (Schizosaccharomyces pombe (strain 972 / ATCC 24843) (Fission yeast)).